Consider the following 229-residue polypeptide: 7-cyano-7-deazaguanine synthase (229 aa).

Tyrosine 9–methionine 19 serves as a coordination point for ATP. Residues cysteine 189, cysteine 199, cysteine 202, and cysteine 205 each coordinate Zn(2+).

The protein belongs to the QueC family. The cofactor is Zn(2+).

It catalyses the reaction 7-carboxy-7-deazaguanine + NH4(+) + ATP = 7-cyano-7-deazaguanine + ADP + phosphate + H2O + H(+). It participates in purine metabolism; 7-cyano-7-deazaguanine biosynthesis. In terms of biological role, catalyzes the ATP-dependent conversion of 7-carboxy-7-deazaguanine (CDG) to 7-cyano-7-deazaguanine (preQ(0)). The sequence is that of 7-cyano-7-deazaguanine synthase from Geotalea daltonii (strain DSM 22248 / JCM 15807 / FRC-32) (Geobacter daltonii).